Here is a 178-residue protein sequence, read N- to C-terminus: Ribosome maturation factor RimP (178 aa).

The protein belongs to the RimP family.

The protein resides in the cytoplasm. Functionally, required for maturation of 30S ribosomal subunits. This is Ribosome maturation factor RimP from Cutibacterium acnes (strain DSM 16379 / KPA171202) (Propionibacterium acnes).